Consider the following 230-residue polypeptide: Uracil-DNA glycosylase (230 aa).

D70 acts as the Proton acceptor in catalysis.

The protein belongs to the uracil-DNA glycosylase (UDG) superfamily. UNG family.

Its subcellular location is the cytoplasm. It carries out the reaction Hydrolyzes single-stranded DNA or mismatched double-stranded DNA and polynucleotides, releasing free uracil.. Excises uracil residues from the DNA which can arise as a result of misincorporation of dUMP residues by DNA polymerase or due to deamination of cytosine. This is Uracil-DNA glycosylase from Pseudomonas putida (strain GB-1).